Here is a 225-residue protein sequence, read N- to C-terminus: Protein-L-isoaspartate O-methyltransferase (225 aa).

Ser63 is an active-site residue.

Belongs to the methyltransferase superfamily. L-isoaspartyl/D-aspartyl protein methyltransferase family.

Its subcellular location is the cytoplasm. The catalysed reaction is [protein]-L-isoaspartate + S-adenosyl-L-methionine = [protein]-L-isoaspartate alpha-methyl ester + S-adenosyl-L-homocysteine. In terms of biological role, catalyzes the methyl esterification of L-isoaspartyl residues in peptides and proteins that result from spontaneous decomposition of normal L-aspartyl and L-asparaginyl residues. It plays a role in the repair and/or degradation of damaged proteins. The polypeptide is Protein-L-isoaspartate O-methyltransferase (Staphylothermus marinus (strain ATCC 43588 / DSM 3639 / JCM 9404 / F1)).